Reading from the N-terminus, the 448-residue chain is MSRLTCLAFPGRSIPMAVLERLSVAARELPASVRALRAVPGVDQVLVLSTCERTEVYAWWTDEADPAALLRALAGQRGLGPEPLLEHAVGLTGREAVQHLLRVTAGLDSFVRGESDIVGQVRAAVQAARAEGAVGLEVQRLVDAAVNTSRRVHRSTGAGLAAGSVASTAVAAVAGLLPDGLAGRDLLVVGTGQVAVSVVAAAREAGARLTVCGRDPERAAAIAPAGARVLGLDDLPGALLDADAVVFGTSSPERLLRAGDLGPGLSEHRSGRELVVVDLCVPRNVDPDVRGVPGVRLLDLTDLRGAAVPGRRPSAPAPAALELAEQIVAQEVDRFLHWWVDRAAAEPVRRLRADVEACVREEVARATRGLSPDLEPLVAEGIRRAVQHLAHGPTRRLLDAAAAGEDEVVALLAGLFAPSAEEDQAVPAYSPQPIGNTSNAAASATPRR.

Residues 50–53, Ser-109, 114–116, and Gln-120 contribute to the substrate site; these read TCER and ESD. The active-site Nucleophile is the Cys-51. 190–195 serves as a coordination point for NADP(+); the sequence is GTGQVA. A disordered region spans residues 423–448; sequence DQAVPAYSPQPIGNTSNAAASATPRR. Residues 433-442 are compositionally biased toward polar residues; that stretch reads PIGNTSNAAA.

The protein belongs to the glutamyl-tRNA reductase family. In terms of assembly, homodimer.

It catalyses the reaction (S)-4-amino-5-oxopentanoate + tRNA(Glu) + NADP(+) = L-glutamyl-tRNA(Glu) + NADPH + H(+). Its pathway is porphyrin-containing compound metabolism; protoporphyrin-IX biosynthesis; 5-aminolevulinate from L-glutamyl-tRNA(Glu): step 1/2. In terms of biological role, catalyzes the NADPH-dependent reduction of glutamyl-tRNA(Glu) to glutamate 1-semialdehyde (GSA). This Nocardioides sp. (strain ATCC BAA-499 / JS614) protein is Glutamyl-tRNA reductase 2.